The primary structure comprises 263 residues: Ribosomal RNA small subunit methyltransferase A (263 aa).

Positions 18, 43, 65, 91, and 110 each coordinate S-adenosyl-L-methionine.

It belongs to the class I-like SAM-binding methyltransferase superfamily. rRNA adenine N(6)-methyltransferase family. RsmA subfamily.

Its subcellular location is the cytoplasm. The enzyme catalyses adenosine(1518)/adenosine(1519) in 16S rRNA + 4 S-adenosyl-L-methionine = N(6)-dimethyladenosine(1518)/N(6)-dimethyladenosine(1519) in 16S rRNA + 4 S-adenosyl-L-homocysteine + 4 H(+). Its function is as follows. Specifically dimethylates two adjacent adenosines (A1518 and A1519) in the loop of a conserved hairpin near the 3'-end of 16S rRNA in the 30S particle. May play a critical role in biogenesis of 30S subunits. This is Ribosomal RNA small subunit methyltransferase A from Ehrlichia chaffeensis (strain ATCC CRL-10679 / Arkansas).